We begin with the raw amino-acid sequence, 63 residues long: Arabinogalactan protein 22 (63 aa).

The signal sequence occupies residues 1-27 (MASLKFPLEILAVFVIISVILLPIAQS). 4-hydroxyproline is present on residues Pro32, Pro34, and Pro36. Residues Pro32, Pro34, and Pro36 are each glycosylated (O-linked (Ara...) hydroxyproline). Ser38 carries GPI-anchor amidated serine lipidation. A propeptide spans 39–63 (DGTSIDQGIAYVLMMVALALTYFIH) (removed in mature form).

Belongs to the AG-peptide AGP family. Post-translationally, contains 4-hydroxyproline; hydroxylated on Pro-32, Pro-34 and Pro-36. In terms of processing, O-glycosylated on hydroxyprolines; noncontiguous hydroxylproline residues are glycosylated with arabinogalactan.

It is found in the cell membrane. Proteoglycan that seems to be implicated in diverse developmental roles such as differentiation, cell-cell recognition, embryogenesis and programmed cell death. In Arabidopsis thaliana (Mouse-ear cress), this protein is Arabinogalactan protein 22.